Reading from the N-terminus, the 496-residue chain is Glutamate--tRNA ligase (496 aa).

A 'HIGH' region motif is present at residues 12-22 (PSPTGHLHIGN). Residues 259-263 (KLSKR) carry the 'KMSKS' region motif. Lys262 contributes to the ATP binding site.

The protein belongs to the class-I aminoacyl-tRNA synthetase family. Glutamate--tRNA ligase type 1 subfamily. As to quaternary structure, monomer.

Its subcellular location is the cytoplasm. The catalysed reaction is tRNA(Glu) + L-glutamate + ATP = L-glutamyl-tRNA(Glu) + AMP + diphosphate. In terms of biological role, catalyzes the attachment of glutamate to tRNA(Glu) in a two-step reaction: glutamate is first activated by ATP to form Glu-AMP and then transferred to the acceptor end of tRNA(Glu). This Lactiplantibacillus plantarum (strain ATCC BAA-793 / NCIMB 8826 / WCFS1) (Lactobacillus plantarum) protein is Glutamate--tRNA ligase.